The primary structure comprises 385 residues: Nod factor hydrolase protein 1 (385 aa).

Positions 1 to 21 (MANFLKLKQFLTLVLILLALA) are cleaved as a signal peptide. One can recognise a GH18 domain in the interval 36-385 (RVKGIYWIEN…TASKAWRPES (350 aa)). 2 N-linked (GlcNAc...) asparagine glycosylation sites follow: Asn115 and Asn134. The active-site Proton donor is the Glu153. N-linked (GlcNAc...) asparagine glycosylation is found at Asn233 and Asn247.

This sequence belongs to the glycosyl hydrolase 18 family. Chitinase class V subfamily.

Symbiotic enzyme that hydrolytically inactivates Nod factors (NFs) with a C16:2 acyl chain produced by the microsymbiont Sinorhizobium meliloti. NFs are lipo-chitooligosaccharide signaling molecules produced by nitrogen-fixing rhizobia to initiate nodulation (symbiosis) on the roots of legumes. Controls NF hydrolysis at the stage of root hair infection. Involved in the regulation of growth and branching of mature nodules. Modulates NF levels and signaling to complete transition of infected nodules to functional nitrogen-fixing organs. Lacks chitinase activity in vitro toward glycol chitin, carboxymethyl-chitin, colloidal chitin, and the chitin oligosaccharides (N-acetylglucosamine) (GlcNAc)6 and (GlcNAc)5. In Medicago truncatula (Barrel medic), this protein is Nod factor hydrolase protein 1.